Here is a 142-residue protein sequence, read N- to C-terminus: Large ribosomal subunit protein uL11 (142 aa).

This sequence belongs to the universal ribosomal protein uL11 family. Part of the ribosomal stalk of the 50S ribosomal subunit. Interacts with L10 and the large rRNA to form the base of the stalk. L10 forms an elongated spine to which L12 dimers bind in a sequential fashion forming a multimeric L10(L12)X complex. In terms of processing, one or more lysine residues are methylated.

In terms of biological role, forms part of the ribosomal stalk which helps the ribosome interact with GTP-bound translation factors. The polypeptide is Large ribosomal subunit protein uL11 (Stenotrophomonas maltophilia (strain R551-3)).